The primary structure comprises 131 residues: Gem-associated protein 7 (131 aa).

The residue at position 1 (methionine 1) is an N-acetylmethionine. Positions 1–29 (MQTPVNIPVPVLRLPRGPDGFSRGFAPDG) constitute an SUZ-C domain. Threonine 3 is subject to Phosphothreonine. In terms of domain architecture, Sm spans 65-131 (RYLRSLLAMV…SDIISYTFKP (67 aa)).

This sequence belongs to the gemin-7 family. As to quaternary structure, part of the core SMN complex that contains SMN1, GEMIN2/SIP1, DDX20/GEMIN3, GEMIN4, GEMIN5, GEMIN6, GEMIN7, GEMIN8 and STRAP/UNRIP. Part of the SMN-Sm complex that contains SMN1, GEMIN2/SIP1, DDX20/GEMIN3, GEMIN4, GEMIN5, GEMIN6, GEMIN7, GEMIN8, STRAP/UNRIP and the Sm proteins SNRPB, SNRPD1, SNRPD2, SNRPD3, SNRPE, SNRPF and SNRPG. Interacts with GEMIN6; the interaction is direct. Interacts with STRAP/UNRIP; the interaction is direct. Interacts with GEMIN8; the interaction is direct. Interacts with SNRPB, SNRPD2, SNRPD3 and SNRPE; the interaction is direct.

The protein resides in the nucleus. The protein localises to the nucleoplasm. Its subcellular location is the gem. It is found in the cytoplasm. In terms of biological role, the SMN complex catalyzes the assembly of small nuclear ribonucleoproteins (snRNPs), the building blocks of the spliceosome, and thereby plays an important role in the splicing of cellular pre-mRNAs. Most spliceosomal snRNPs contain a common set of Sm proteins SNRPB, SNRPD1, SNRPD2, SNRPD3, SNRPE, SNRPF and SNRPG that assemble in a heptameric protein ring on the Sm site of the small nuclear RNA to form the core snRNP (Sm core). In the cytosol, the Sm proteins SNRPD1, SNRPD2, SNRPE, SNRPF and SNRPG are trapped in an inactive 6S pICln-Sm complex by the chaperone CLNS1A that controls the assembly of the core snRNP. To assemble core snRNPs, the SMN complex accepts the trapped 5Sm proteins from CLNS1A forming an intermediate. Binding of snRNA inside 5Sm triggers eviction of the SMN complex, thereby allowing binding of SNRPD3 and SNRPB to complete assembly of the core snRNP. The protein is Gem-associated protein 7 (GEMIN7) of Homo sapiens (Human).